Here is a 366-residue protein sequence, read N- to C-terminus: tRNA 2-selenouridine synthase (366 aa).

Residues 12–135 (FLNDVPMMDA…MRTFLLDTLH (124 aa)) form the Rhodanese domain. Cys-95 acts as the S-selanylcysteine intermediate in catalysis.

The protein belongs to the SelU family. As to quaternary structure, monomer.

The enzyme catalyses 5-methylaminomethyl-2-thiouridine(34) in tRNA + selenophosphate + (2E)-geranyl diphosphate + H2O + H(+) = 5-methylaminomethyl-2-selenouridine(34) in tRNA + (2E)-thiogeraniol + phosphate + diphosphate. It catalyses the reaction 5-methylaminomethyl-2-thiouridine(34) in tRNA + (2E)-geranyl diphosphate = 5-methylaminomethyl-S-(2E)-geranyl-thiouridine(34) in tRNA + diphosphate. It carries out the reaction 5-methylaminomethyl-S-(2E)-geranyl-thiouridine(34) in tRNA + selenophosphate + H(+) = 5-methylaminomethyl-2-(Se-phospho)selenouridine(34) in tRNA + (2E)-thiogeraniol. The catalysed reaction is 5-methylaminomethyl-2-(Se-phospho)selenouridine(34) in tRNA + H2O = 5-methylaminomethyl-2-selenouridine(34) in tRNA + phosphate. Functionally, involved in the post-transcriptional modification of the uridine at the wobble position (U34) of tRNA(Lys), tRNA(Glu) and tRNA(Gln). Catalyzes the conversion of 2-thiouridine (S2U-RNA) to 2-selenouridine (Se2U-RNA). Acts in a two-step process involving geranylation of 2-thiouridine (S2U) to S-geranyl-2-thiouridine (geS2U) and subsequent selenation of the latter derivative to 2-selenouridine (Se2U) in the tRNA chain. This chain is tRNA 2-selenouridine synthase, found in Pseudomonas syringae pv. tomato (strain ATCC BAA-871 / DC3000).